The sequence spans 294 residues: UDP-3-O-acyl-N-acetylglucosamine deacetylase (294 aa).

Positions 75, 232, and 236 each coordinate Zn(2+). The active-site Proton donor is His259.

This sequence belongs to the LpxC family. Zn(2+) serves as cofactor.

It carries out the reaction a UDP-3-O-[(3R)-3-hydroxyacyl]-N-acetyl-alpha-D-glucosamine + H2O = a UDP-3-O-[(3R)-3-hydroxyacyl]-alpha-D-glucosamine + acetate. It participates in glycolipid biosynthesis; lipid IV(A) biosynthesis; lipid IV(A) from (3R)-3-hydroxytetradecanoyl-[acyl-carrier-protein] and UDP-N-acetyl-alpha-D-glucosamine: step 2/6. Catalyzes the hydrolysis of UDP-3-O-myristoyl-N-acetylglucosamine to form UDP-3-O-myristoylglucosamine and acetate, the committed step in lipid A biosynthesis. The sequence is that of UDP-3-O-acyl-N-acetylglucosamine deacetylase from Campylobacter jejuni subsp. jejuni serotype O:6 (strain 81116 / NCTC 11828).